A 407-amino-acid chain; its full sequence is D-galactonate dehydratase family member Pjdr2_1176 (407 aa).

Asp208 contacts Mg(2+). His210 is a D-arabinonate binding site. Mg(2+) is bound by residues Glu234 and Glu260. 3 residues coordinate D-arabinonate: Glu260, Arg281, and Glu337.

The protein belongs to the mandelate racemase/muconate lactonizing enzyme family. GalD subfamily.

Has no detectable activity with D-mannonate and with a panel of 70 other acid sugars (in vitro), in spite of the conservation of the residues that are expected to be important for catalytic activity and cofactor binding. May have evolved a divergent function. The protein is D-galactonate dehydratase family member Pjdr2_1176 of Paenibacillus sp. (strain JDR-2).